Reading from the N-terminus, the 389-residue chain is tRNA(Met) cytidine acetate ligase (389 aa).

ATP contacts are provided by residues 8 to 21 (IAEF…HEYL), G97, N153, and R176.

The protein belongs to the TmcAL family.

The protein localises to the cytoplasm. The catalysed reaction is cytidine(34) in elongator tRNA(Met) + acetate + ATP = N(4)-acetylcytidine(34) in elongator tRNA(Met) + AMP + diphosphate. Catalyzes the formation of N(4)-acetylcytidine (ac(4)C) at the wobble position of elongator tRNA(Met), using acetate and ATP as substrates. First activates an acetate ion to form acetyladenylate (Ac-AMP) and then transfers the acetyl group to tRNA to form ac(4)C34. This is tRNA(Met) cytidine acetate ligase from Lactococcus lactis subsp. cremoris (strain SK11).